We begin with the raw amino-acid sequence, 424 residues long: MKTLLIFTLTLLCSGCLEDTAVTPINTINPDSVEYYGVAAANNAFAFDMYSKLVQLESREKNNILFSPYSVSAAMAICYEGTEGTAKEQISNVFYFPANNTVFKVRLKETNDKVYSGSDGYELENANAIWVQEEYPVKEEYIFNVKNYYRSEVTNLDFVEKPDESRDAINEWVEDKTDRKIKDIVPKGSITDDTRLILTNAIYFNGKWEHEFDKKMTSKKTFYPTKREEVSVDMMYISSNFNYSENLKAKIIELPYKGNDLSMYIVLPKGNNITEFENNFTVNEYTELKYNMESLGDVETSIPKFKFETKTELSDSLIEMGVADAFDLKLANFSGISEIRLLISRMIHQDFIDVQEEVTEAAASTTVFIGSVSSSKSKSREFKADLPFIFFIEDRRTDCILFMGKVEYPEYEGTGRFWSLPWNK.

It belongs to the serpin family.

This is an uncharacterized protein from Methanosarcina acetivorans (strain ATCC 35395 / DSM 2834 / JCM 12185 / C2A).